Reading from the N-terminus, the 420-residue chain is 3-phosphoshikimate 1-carboxyvinyltransferase (420 aa).

The interval 1 to 24 (MTRTAKLTIIPPGRPLSGRAMPPG) is disordered. Positions 26, 27, and 31 each coordinate 3-phosphoshikimate. Residue Lys-26 coordinates phosphoenolpyruvate. The phosphoenolpyruvate site is built by Gly-97 and Arg-125. Ser-170, Ser-171, Gln-172, Asp-297, Asn-320, and Lys-324 together coordinate 3-phosphoshikimate. Phosphoenolpyruvate is bound at residue Gln-172. Asp-297 functions as the Proton acceptor in the catalytic mechanism. The phosphoenolpyruvate site is built by Arg-328, Arg-375, and Lys-400.

This sequence belongs to the EPSP synthase family. As to quaternary structure, monomer.

It is found in the cytoplasm. It catalyses the reaction 3-phosphoshikimate + phosphoenolpyruvate = 5-O-(1-carboxyvinyl)-3-phosphoshikimate + phosphate. It functions in the pathway metabolic intermediate biosynthesis; chorismate biosynthesis; chorismate from D-erythrose 4-phosphate and phosphoenolpyruvate: step 6/7. In terms of biological role, catalyzes the transfer of the enolpyruvyl moiety of phosphoenolpyruvate (PEP) to the 5-hydroxyl of shikimate-3-phosphate (S3P) to produce enolpyruvyl shikimate-3-phosphate and inorganic phosphate. This is 3-phosphoshikimate 1-carboxyvinyltransferase from Rhizobium etli (strain CIAT 652).